The chain runs to 234 residues: MTKIAMANFKSAMPIFKSHAYLEELEKTLKPQHFDRVFVFPDFLGLLPNSFLHFTLGAQNAYPKDCGAFTGEITSQHLEELKINTLLIGHSERRLLLKESPSFLKEKFDFFKSKNFKIVYCIGEELTTREKGFKAVKEFLNEQLENIDLNYPNLVVAYEPIWAIGTKKSASLEDIYLTHGFLKQILNQKTPLLYGGSVNAQNAKEILGIDSVDGLLIGSASLELENFKTIISFL.

Substrate is bound at residue N8 to K10. H90 serves as the catalytic Electrophile. E159 (proton acceptor) is an active-site residue. Residues G165 and S197 each coordinate substrate.

It belongs to the triosephosphate isomerase family. In terms of assembly, homodimer.

It is found in the cytoplasm. The catalysed reaction is D-glyceraldehyde 3-phosphate = dihydroxyacetone phosphate. It participates in carbohydrate biosynthesis; gluconeogenesis. The protein operates within carbohydrate degradation; glycolysis; D-glyceraldehyde 3-phosphate from glycerone phosphate: step 1/1. Involved in the gluconeogenesis. Catalyzes stereospecifically the conversion of dihydroxyacetone phosphate (DHAP) to D-glyceraldehyde-3-phosphate (G3P). The sequence is that of Triosephosphate isomerase from Helicobacter pylori (strain Shi470).